The following is a 331-amino-acid chain: Anthranilate phosphoribosyltransferase (331 aa).

5-phospho-alpha-D-ribose 1-diphosphate is bound by residues G79, 82 to 83 (GD), T87, 89 to 92 (NIST), 107 to 115 (KHGNYGATS), and A119. Residue G79 participates in anthranilate binding. Mg(2+) is bound at residue S91. Position 110 (N110) interacts with anthranilate. Residue R165 participates in anthranilate binding. Mg(2+)-binding residues include D223 and E224.

This sequence belongs to the anthranilate phosphoribosyltransferase family. In terms of assembly, homodimer. Mg(2+) is required as a cofactor.

It catalyses the reaction N-(5-phospho-beta-D-ribosyl)anthranilate + diphosphate = 5-phospho-alpha-D-ribose 1-diphosphate + anthranilate. The protein operates within amino-acid biosynthesis; L-tryptophan biosynthesis; L-tryptophan from chorismate: step 2/5. Functionally, catalyzes the transfer of the phosphoribosyl group of 5-phosphorylribose-1-pyrophosphate (PRPP) to anthranilate to yield N-(5'-phosphoribosyl)-anthranilate (PRA). The chain is Anthranilate phosphoribosyltransferase from Phocaeicola vulgatus (strain ATCC 8482 / DSM 1447 / JCM 5826 / CCUG 4940 / NBRC 14291 / NCTC 11154) (Bacteroides vulgatus).